We begin with the raw amino-acid sequence, 249 residues long: MEELILGIVQGLTEFLPISSSGHLAIFTAIFNSTPDVGYFAFLHLATFLAVLIFVKSEVFEIVNGISKKDNEYINLASKLVLSTIPAVIVGLCFGDFIESVFSSTFLIGVFLSITGILMLLSDKLNQNLKTIKSIPYLDAMIVGIFQAFSVLPGISRSGTTLFAALFLGMKKEDAVKYSFLMGLPVTFGAGILELQKVSFSAEQLFGFVISFLTGLLGLYLVKKMVIGGKLKIFGYYCFLASFFVLMFL.

The next 8 membrane-spanning stretches (helical) occupy residues 11–31, 35–55, 80–100, 101–121, 135–155, 175–195, 202–222, and 226–246; these read GLTE…TAIF, PDVG…LIFV, LVLS…FIES, VFSS…LMLL, IPYL…LPGI, AVKY…ILEL, AEQL…LYLV, and VIGG…FFVL.

This sequence belongs to the UppP family.

The protein resides in the cell membrane. It carries out the reaction di-trans,octa-cis-undecaprenyl diphosphate + H2O = di-trans,octa-cis-undecaprenyl phosphate + phosphate + H(+). In terms of biological role, catalyzes the dephosphorylation of undecaprenyl diphosphate (UPP). This Methanococcus maripaludis (strain C5 / ATCC BAA-1333) protein is Undecaprenyl-diphosphatase.